A 113-amino-acid chain; its full sequence is UPF0122 protein MCAP_0480 (113 aa).

The protein belongs to the UPF0122 family.

Might take part in the signal recognition particle (SRP) pathway. This is inferred from the conservation of its genetic proximity to ftsY/ffh. May be a regulatory protein. The protein is UPF0122 protein MCAP_0480 of Mycoplasma capricolum subsp. capricolum (strain California kid / ATCC 27343 / NCTC 10154).